A 577-amino-acid chain; its full sequence is Proline--tRNA ligase (577 aa).

The protein belongs to the class-II aminoacyl-tRNA synthetase family. ProS type 1 subfamily. In terms of assembly, homodimer.

The protein localises to the cytoplasm. The enzyme catalyses tRNA(Pro) + L-proline + ATP = L-prolyl-tRNA(Pro) + AMP + diphosphate. Catalyzes the attachment of proline to tRNA(Pro) in a two-step reaction: proline is first activated by ATP to form Pro-AMP and then transferred to the acceptor end of tRNA(Pro). As ProRS can inadvertently accommodate and process non-cognate amino acids such as alanine and cysteine, to avoid such errors it has two additional distinct editing activities against alanine. One activity is designated as 'pretransfer' editing and involves the tRNA(Pro)-independent hydrolysis of activated Ala-AMP. The other activity is designated 'posttransfer' editing and involves deacylation of mischarged Ala-tRNA(Pro). The misacylated Cys-tRNA(Pro) is not edited by ProRS. The chain is Proline--tRNA ligase from Helicobacter pylori (strain HPAG1).